A 1016-amino-acid polypeptide reads, in one-letter code: MSSYLRSFIFGLLTISLAQCSPILKDTKDTKFSTGSNISLKKRDTNVFDSVVDTINPASYFGTVSHPVTPAGVSTDSLSSPIETNKFFDNNLLGSRTNFMYADPFRYWWQSSDTMGGICIAHTDDNQRVMDTDDTIPSYYYEPIGICSLGFGASGITSNTDPIVDEIDQMSARFTFSWDSSSMQLTLTEGMAVTTAVYTNAIPQIFSSTLYINDFVEVPGTSAVQKYRVTMSDNHVWLIYIYGDSLTLTESTSQMLVGSNTFNGYIQIAKIPLGDGTAEALYDTYAGVYITGISISGYVEDAVGYYSFDFTTAGDTSVEPLFFLLPHQVDTAVSGTKVTSIVLASLVSGDMNAAAGNSITFAEAIPQDIGFLPWSPTGGQIGYSEEALEIIAEVAGTELGEDFSANSNLNSMYYSGKVLAKYAMLCVTINDILGDETSSEQCIQKLEAAFARFVDNQQIYPLTYDNTWKGVVSVAGLSGDSLADFGNSYYNDHHFHYGYFVFTAAVIGHIDPDWINTGNNKEWVNFLVRDVANPSSNDPYFPKHRMIDIYHGHGWASGLFESNDGKDEESTSEDYNFFFGMKLWGQVIGDSDMEDRANIILGIERNALNKYMLYADGNVQPTSMQPNYVAGITFMNKITHTTYFGTNIEYIQGIHMLPITPISAFIRGPSFVLAEWNALLASVIDYVDSGWRSLLYANLAIAEPEESYEYFSSSDFNTDYLDDGASRAWYLAYAAGLWANDAVYYPVSSSSTTTTSTSTGSVTTTSTTATASCTLPISYTSTPTTTSISGTCNGATFDASLYVCDGTVLCPIVNGVSYQNCNGACYNPSQYGCDNGALGPVQSSSTTSSITPTPTTTSSITPTPTTTSTTTTAQSTGMQLCGSNYYDASSYYCDNDQLCPIIDGVDYLSCNGACYNPSQYVCSDGSLSPNTVTTTKATTTFTPTPTTTTTPTPTTTSATSTNVIAQCGSAWYDSQSYICYGNILCPIINGSPLLACGNACYDSSIYGCSNGALVAA.

The signal sequence occupies residues 1 to 20 (MSSYLRSFIFGLLTISLAQC). Asn-37 carries an N-linked (GlcNAc...) asparagine glycan. Positions 45–272 (TNVFDSVVDT…NGYIQIAKIP (228 aa)) are beta-sandwich subdomain. The region spanning 45-741 (TNVFDSVVDT…AYAAGLWAND (697 aa)) is the GH81 domain. The tract at residues 273 to 364 (LGDGTAEALY…AGNSITFAEA (92 aa)) is alpha/beta subdomain. Residues 379–741 (GQIGYSEEAL…AYAAGLWAND (363 aa)) are (alpha/beta)6 barrel subdomain. Asp-492 is a catalytic residue. (1,3-beta-D-glucosyl)n is bound by residues His-496, Asp-567, Glu-569, Glu-573, and Tyr-650. Residues Glu-569 and Glu-573 contribute to the active site. Residues 748–1016 (SSSSTTTTST…GCSNGALVAA (269 aa)) are required for catalytic activity against insoluble beta-glucan and to restrict localization of the enzyme to the cell septum. A disordered region spans residues 844-872 (SSTTSSITPTPTTTSSITPTPTTTSTTTT).

Belongs to the glycosyl hydrolase 81 family.

The protein resides in the cell septum. It carries out the reaction Hydrolysis of (1-&gt;3)-beta-D-glucosidic linkages in (1-&gt;3)-beta-D-glucans.. In terms of biological role, cleaves internal linkages in 1,3-beta-glucan. Has a role in cell separation where it is required for the degradation of the primary septum after completion of cytokinesis. The protein is Primary septum glucan endo-1,3-beta-D-glucosidase of Schizosaccharomyces pombe (strain 972 / ATCC 24843) (Fission yeast).